Here is a 235-residue protein sequence, read N- to C-terminus: MSKNSKAYREAAEKVDKTKLYSPLEAAKLAKETSSKKQDATVEVAIRLGVDPRKADQMVRGTVNLPHGTGKTARVAVFAVGDKAEQAAAAGADIVGSDDLIEQIQGGMLDFDAAIATPDQMAKVGRIARILGPRGLMPNPKTGTVTADVAKAVSDIKGGKINFRVDKQANLHIVIGKASFDEKKLAENYGAALDEILRAKPSASKGRYLKKIVVSTTTGPGIPVDPQVTRNFAEA.

Belongs to the universal ribosomal protein uL1 family. In terms of assembly, part of the 50S ribosomal subunit.

In terms of biological role, binds directly to 23S rRNA. The L1 stalk is quite mobile in the ribosome, and is involved in E site tRNA release. Its function is as follows. Protein L1 is also a translational repressor protein, it controls the translation of the L11 operon by binding to its mRNA. The protein is Large ribosomal subunit protein uL1 of Mycobacterium sp. (strain JLS).